The sequence spans 810 residues: MAVGENKEQILNVRIEDEIKTSYLNYAMSVIVSRALPDVRDGLKPVHRRILYSMYEMGLRSDKAFKKAGRIVGDVLGKYHPHGDQSIYDALVRLAQDFSLRYPVIRGQGNFGSIDGDPPAAMRYTEAKMEKITEYIVKDIDKETVNFKSNYDDSLSEPEIMPSSFPFLLVNGSSGIAVGMATNMAPHNLREICDAIVYMLDNENASIFDLLKIVKGPDFPTFGEIVYNDNLIKAYKTGKGSVVIRARYHIEERAEDRNAIIVTEIPYTVNKSALLMKVALLAKEEKLEGLLDIRDESDREGIRIVLEVKRGFDPHVIMNLLYEYTEFKKHFSINNLALVNGIPKQLNLEELLFEFIEHRKNIIERRIEFDLRKAKEKAHVLEGLNIALNNIDEVIKIIKSSKLAKDARERLVSNFGLSEIQANSVLDMRLQKLTALEIFKLEEELNILLSLIKDYEDILLNPVRIINIIREETINLGLKFGDERRTKIIYDEEVLKTSMSDLMQKENIVVMLTKKGFLKRLSQNEYKLQGTGGKGLSSFDLNDGDEIVIALCVNTHDYLFMISNEGKLYLINAYEIKDSSRASKGQNISELINLGDQEEILTIKNSKDLTDDAYLLLTTASGKIARFESTDFKAVKSRGVIVIKLNDKDFVTSAEIVFKDEKVICLSKKGSAFIFNSRDVRLTNRGTQGVCGMKLKEGDLFVKVLSVKENPYLLIVSENGYGKRLNMSKISELKRGATGYTSYKKSDKKAGSVVDAIAVSEDDEILLVSKRSKALRTVAGKVSEQGKDARGIQVLFLDNDSLVSVSKFIK.

Residues 36-502 enclose the Topo IIA-type catalytic domain; sequence LPDVRDGLKP…EVLKTSMSDL (467 aa). Catalysis depends on Tyr-124, which acts as the O-(5'-phospho-DNA)-tyrosine intermediate. Residues 499–810 form a C-terminal domain region; it reads MSDLMQKENI…SLVSVSKFIK (312 aa). Residues 529–535 carry the GyrA-box motif; that stretch reads QGTGGKG.

This sequence belongs to the type II topoisomerase GyrA/ParC subunit family. In terms of assembly, heterotetramer, composed of two GyrA and two GyrB chains. In the heterotetramer, GyrA contains the active site tyrosine that forms a transient covalent intermediate with DNA, while GyrB binds cofactors and catalyzes ATP hydrolysis.

Its subcellular location is the cytoplasm. It carries out the reaction ATP-dependent breakage, passage and rejoining of double-stranded DNA.. In terms of biological role, a type II topoisomerase that negatively supercoils closed circular double-stranded (ds) DNA in an ATP-dependent manner to modulate DNA topology and maintain chromosomes in an underwound state. Negative supercoiling favors strand separation, and DNA replication, transcription, recombination and repair, all of which involve strand separation. Also able to catalyze the interconversion of other topological isomers of dsDNA rings, including catenanes and knotted rings. Type II topoisomerases break and join 2 DNA strands simultaneously in an ATP-dependent manner. This chain is DNA gyrase subunit A, found in Borreliella burgdorferi (strain ATCC 35210 / DSM 4680 / CIP 102532 / B31) (Borrelia burgdorferi).